The primary structure comprises 267 residues: Methylglyoxal reductase DkgB (267 aa).

Catalysis depends on tyrosine 39, which acts as the Proton donor. Position 97 (histidine 97) interacts with substrate. NADP(+) is bound at residue 179-231 (MTLAYGKALKDEVIARIAAKHNATPAQVILAWAMGEGYSVIPSSTRRENLASS).

The protein belongs to the aldo/keto reductase family. As to quaternary structure, monomer.

The protein localises to the cytoplasm. The catalysed reaction is hydroxyacetone + NADP(+) = methylglyoxal + NADPH + H(+). Functionally, aldo-keto reductase that significantly contributes to cellular methylglyoxal detoxification by catalyzing the NADPH-dependent conversion of methylglyoxal to acetol. The polypeptide is Methylglyoxal reductase DkgB (Salmonella typhimurium (strain LT2 / SGSC1412 / ATCC 700720)).